Reading from the N-terminus, the 514-residue chain is 3-octaprenyl-4-hydroxybenzoate carboxy-lyase (514 aa).

Position 177 (Asn177) interacts with Mn(2+). Prenylated FMN-binding positions include 180–182 (IYR), 194–196 (RWL), and 199–200 (RG). Glu243 contributes to the Mn(2+) binding site. Asp314 functions as the Proton donor in the catalytic mechanism.

The protein belongs to the UbiD family. Homohexamer. Requires prenylated FMN as cofactor. The cofactor is Mn(2+).

It is found in the cell membrane. It catalyses the reaction a 4-hydroxy-3-(all-trans-polyprenyl)benzoate + H(+) = a 2-(all-trans-polyprenyl)phenol + CO2. It functions in the pathway cofactor biosynthesis; ubiquinone biosynthesis. In terms of biological role, catalyzes the decarboxylation of 3-octaprenyl-4-hydroxy benzoate to 2-octaprenylphenol, an intermediate step in ubiquinone biosynthesis. This Bordetella bronchiseptica (strain ATCC BAA-588 / NCTC 13252 / RB50) (Alcaligenes bronchisepticus) protein is 3-octaprenyl-4-hydroxybenzoate carboxy-lyase.